Reading from the N-terminus, the 118-residue chain is Small ribosomal subunit protein uS13 (118 aa).

Positions 94-118 are disordered; that stretch reads GLPLRGQRTKTNARTRKGRRKGTSS.

Belongs to the universal ribosomal protein uS13 family. In terms of assembly, part of the 30S ribosomal subunit. Forms a loose heterodimer with protein S19. Forms two bridges to the 50S subunit in the 70S ribosome.

Located at the top of the head of the 30S subunit, it contacts several helices of the 16S rRNA. In the 70S ribosome it contacts the 23S rRNA (bridge B1a) and protein L5 of the 50S subunit (bridge B1b), connecting the 2 subunits; these bridges are implicated in subunit movement. Contacts the tRNAs in the A and P-sites. The sequence is that of Small ribosomal subunit protein uS13 from Legionella pneumophila (strain Paris).